The sequence spans 1128 residues: Transient receptor potential-gamma protein (1128 aa).

The Cytoplasmic segment spans residues 1–325 (MMEEENTIRP…MALQAVDIIR (325 aa)). 2 ANK repeats span residues 57-86 (LGRT…DTKD) and 131-160 (PDIT…VLPM). A helical transmembrane segment spans residues 326 to 346 (IGIMFPIFSLAYILAPYSSIG). Residues 347-403 (QTMRKPFIKFICHSASYFTFLFLLMLASQRIETFIGGWFFADSSGMLNTMEELPTKR) lie on the Extracellular side of the membrane. A helical transmembrane segment spans residues 404 to 424 (GAKPTFIEWLILAWVSGLIWS). The Cytoplasmic portion of the chain corresponds to 425-444 (EVKQLWDVGLQEYLNDMWNV). The chain crosses the membrane as a helical span at residues 445-465 (IDFVTNSLYVATVALRVVSFF). Topologically, residues 466–492 (QVQKEMIYNSHATDLPRERWDAWDPML) are extracellular. The helical transmembrane segment at 493–513 (ISEGLFSAANIFSSLKLVYIF) threads the bilayer. The Cytoplasmic portion of the chain corresponds to 514-535 (SVNPHLGPLQVSLSRMVMDIMK). Residues 536-556 (FFFLYVLVLFAFGSGLNQLLW) form a helical membrane-spanning segment. The Extracellular segment spans residues 557–629 (YYADLEKKRC…GIKIFTRFWG (73 aa)). A helical membrane pass occupies residues 630-650 (MLMFGTYSVINIVVLLNLLIA). Residues 651 to 1128 (MMNHSYQLIS…SCVSTTGAIG (478 aa)) are Cytoplasmic-facing. 2 disordered regions span residues 865–898 (RQQS…TASS) and 1064–1111 (AAEA…SVNS). Residues 878–893 (ESPTTPTAPQGTQGAA) show a composition bias toward low complexity. Polar residues predominate over residues 1085–1111 (TQSQHDSVETNSTFTLSIDPSNTSVNS).

It belongs to the transient receptor (TC 1.A.4) family. STrpC subfamily. Interacts preferentially with trpl and interacts to a lower extent with trp. As to expression, expressed predominantly in the rhabdomeres of photoreceptor cells.

The protein localises to the cell projection. It localises to the rhabdomere membrane. In terms of biological role, a light-sensitive calcium channel that is required for inositide-mediated Ca(2+) entry in the retina during phospholipase C (PLC)-mediated phototransduction. Forms a regulated cation channel when heteromultimerized with trpl. In Drosophila melanogaster (Fruit fly), this protein is Transient receptor potential-gamma protein (Trpgamma).